Reading from the N-terminus, the 296-residue chain is Nucleotide-binding protein RSc0403 (296 aa).

8–15 (GMSGSGKS) serves as a coordination point for ATP. 57–60 (DIRS) contacts GTP. A disordered region spans residues 99 to 124 (TRRRHPLSIRNGRPDAGNPPSAAKGP).

Belongs to the RapZ-like family.

In terms of biological role, displays ATPase and GTPase activities. This chain is Nucleotide-binding protein RSc0403, found in Ralstonia nicotianae (strain ATCC BAA-1114 / GMI1000) (Ralstonia solanacearum).